Reading from the N-terminus, the 160-residue chain is Ribosomal RNA large subunit methyltransferase H (160 aa).

Residues L76 and G108 each contribute to the S-adenosyl-L-methionine site.

This sequence belongs to the RNA methyltransferase RlmH family. Homodimer.

It is found in the cytoplasm. It catalyses the reaction pseudouridine(1915) in 23S rRNA + S-adenosyl-L-methionine = N(3)-methylpseudouridine(1915) in 23S rRNA + S-adenosyl-L-homocysteine + H(+). Functionally, specifically methylates the pseudouridine at position 1915 (m3Psi1915) in 23S rRNA. The protein is Ribosomal RNA large subunit methyltransferase H of Afipia carboxidovorans (strain ATCC 49405 / DSM 1227 / KCTC 32145 / OM5) (Oligotropha carboxidovorans).